The sequence spans 398 residues: MRARWGRRGARRGGPGLPGTHLALLAASLLSSSVAIYVCWKQLPPLPWASPSPPRPVNVLLWWEPFRGRHNPRRPPPDCQRRFNISGCVLHTDRAAYEEAQAVLFHHRDLVKGPPDWPPPWGVQMPPVEEREGLVMDDEGQEAEAETSAALGPRPAGQRWVWMNFESPSHSPGLQGLAGNIFNWTLSYRADSDIFVPYGYLYPRTHPSEQPPGLVPPLARKQGLVAWVVSNWDERQARVRYYRQLSQYVTVDVFGKGGPGQPLPDAELVHTVARYKFYLAFENSQHLDYITEKLWRNAFLAGAVPVVLGPNRTNYERFVPSNAFIHVDDFPSASSLAAHLQFLDRNPTVYRGYFRWRRSHAVHVTSFWDEPWCLACQAVQKAGNQRKSVPNLAGWFQQ.

The Cytoplasmic segment spans residues 1–15 (MRARWGRRGARRGGP). Residues 16 to 40 (GLPGTHLALLAASLLSSSVAIYVCW) traverse the membrane as a helical; Signal-anchor for type II membrane protein segment. Residues 41–398 (KQLPPLPWAS…VPNLAGWFQQ (358 aa)) are Lumenal-facing. Asn-84, Asn-183, and Asn-311 each carry an N-linked (GlcNAc...) asparagine glycan.

Belongs to the glycosyltransferase 10 family.

Its subcellular location is the golgi apparatus. It is found in the golgi stack membrane. The catalysed reaction is a beta-D-galactosyl-(1-&gt;4)-N-acetyl-beta-D-glucosaminyl derivative + GDP-beta-L-fucose = a beta-D-galactosyl-(1-&gt;4)-[alpha-L-fucosyl-(1-&gt;3)]-N-acetyl-beta-D-glucosaminyl derivative + GDP + H(+). The enzyme catalyses an N-acetyl-alpha-neuraminyl-(2-&gt;3)-beta-D-galactosyl-(1-&gt;4)-N-acetyl-beta-D-glucosaminyl derivative + GDP-beta-L-fucose = an alpha-Neu5Ac-(2-&gt;3)-beta-D-Gal-(1-&gt;4)-[alpha-L-Fuc-(1-&gt;3)]-beta-D-GlcNAc derivative + GDP + H(+). It carries out the reaction an alpha-Neu5Ac-(2-&gt;3)-beta-D-Gal-(1-&gt;4)-beta-D-GlcNAc-(1-&gt;3)-beta-D-Gal-(1-&gt;4)-beta-D-GlcNAc derivative + GDP-beta-L-fucose = an alpha-Neu5Ac-(2-&gt;3)-beta-D-Gal-(1-&gt;4)-beta-D-GlcNAc-(1-&gt;3)-beta-D-Gal-(1-&gt;4)-[alpha-L-Fuc-(1-&gt;3)]-beta-D-GlcNAc derivative + GDP + H(+). It catalyses the reaction an alpha-Neu5Ac-(2-&gt;3)-beta-D-Gal-(1-&gt;4)-beta-D-GlcNAc6S derivative + GDP-beta-L-fucose = an alpha-Neu5Ac-(2-&gt;3)-beta-D-Gal-(1-&gt;4)-[alpha-L-Fuc-(1-&gt;3)]-beta-D-GlcNAc6S derivative + GDP + H(+). Its pathway is protein modification; protein glycosylation. Its function is as follows. Catalyzes alpha(1-&gt;3) linkage of fucosyl moiety transferred from GDP-beta-L-fucose to N-acetyl glucosamine (GlcNAc) within type 2 lactosamine (LacNAc, Gal-beta(1-&gt;4)GlcNAc) glycan attached to N- or O-linked glycoproteins. Robustly fucosylates nonsialylated distal LacNAc unit of the polylactosamine chain to form Lewis X antigen (CD15), a glycan determinant known to mediate important cellular functions in development and immunity. Fucosylates with lower efficiency sialylated LacNAc acceptors to form sialyl Lewis X and 6-sulfo sialyl Lewis X determinants that serve as recognition epitopes for C-type lectins. Together with FUT7 contributes to SELE, SELL and SELP selectin ligand biosynthesis and selectin-dependent lymphocyte homing, leukocyte migration and blood leukocyte homeostasis. In a cell type specific manner, may also fucosylate the internal LacNAc unit of the polylactosamine chain to form VIM-2 antigen that serves as recognition epitope for SELE. The protein is Alpha-(1,3)-fucosyltransferase 4 (FUT4) of Bos taurus (Bovine).